A 323-amino-acid chain; its full sequence is o-succinylbenzoate synthase (323 aa).

Lys134 acts as the Proton donor in catalysis. Mg(2+)-binding residues include Asp162, Glu191, and Asp214. Lys236 serves as the catalytic Proton acceptor.

Belongs to the mandelate racemase/muconate lactonizing enzyme family. MenC type 1 subfamily. Requires a divalent metal cation as cofactor.

It carries out the reaction (1R,6R)-6-hydroxy-2-succinyl-cyclohexa-2,4-diene-1-carboxylate = 2-succinylbenzoate + H2O. It functions in the pathway quinol/quinone metabolism; 1,4-dihydroxy-2-naphthoate biosynthesis; 1,4-dihydroxy-2-naphthoate from chorismate: step 4/7. Its pathway is quinol/quinone metabolism; menaquinone biosynthesis. Functionally, converts 2-succinyl-6-hydroxy-2,4-cyclohexadiene-1-carboxylate (SHCHC) to 2-succinylbenzoate (OSB). This chain is o-succinylbenzoate synthase, found in Proteus mirabilis (strain HI4320).